Consider the following 286-residue polypeptide: Aquaporin PIP2-4 (286 aa).

Helical transmembrane passes span 40–60 (ALIAEFVATLLFLYVTVATVI) and 77–97 (CGGVGVLGIAWAFGGMIFILV). The NPA 1 signature appears at 109-111 (NPA). 3 helical membrane passes run 128–148 (LLYMAAQCLGAICGVALVKGF), 170–190 (GTGLAAEIIGTFVLVYTVFSA), and 204–224 (VLAPLPIGFAVFMVHLATIPI). An NPA 2 motif is present at residues 230–232 (NPA). A helical transmembrane segment spans residues 252-272 (IFWVGPFIGAAIAALYHQVIL).

This sequence belongs to the MIP/aquaporin (TC 1.A.8) family. PIP (TC 1.A.8.11) subfamily. Expressed in roots.

The protein localises to the cell membrane. Functionally, water channel required to facilitate the transport of water across cell membrane. May play a role in root water uptake. In Oryza sativa subsp. japonica (Rice), this protein is Aquaporin PIP2-4 (PIP2-4).